The primary structure comprises 440 residues: C4-dicarboxylate transport protein (440 aa).

9 helical membrane passes run V15–A35, L46–M66, Y78–V98, A146–L166, I190–I210, L224–C244, V291–L311, I332–G352, and I354–I374. Residues G420–R440 are disordered.

This sequence belongs to the dicarboxylate/amino acid:cation symporter (DAACS) (TC 2.A.23) family.

Its subcellular location is the cell inner membrane. Responsible for the transport of dicarboxylates such as succinate, fumarate, and malate from the periplasm across the membrane. The protein is C4-dicarboxylate transport protein of Pseudomonas putida (strain ATCC 700007 / DSM 6899 / JCM 31910 / BCRC 17059 / LMG 24140 / F1).